The primary structure comprises 104 residues: Probable head completion protein 1 (104 aa).

The protein belongs to the skunalikevirus head completion protein 1 family.

Its subcellular location is the virion. Its function is as follows. Probable head completion protein that exhibits an open central channel for viral DNA ejection. Part of the head-tail connector by binding to the portal protein and to the head completion protein 2. Plays a role in morphogenesis of the virion capsid after genome packaging. This Lactococcus lactis (Lactococcus lactis bacteriophage p2) protein is Probable head completion protein 1.